The following is a 202-amino-acid chain: Small ribosomal subunit protein uS2 (202 aa).

The protein belongs to the universal ribosomal protein uS2 family.

The chain is Small ribosomal subunit protein uS2 (rps2) from Pyrococcus abyssi (strain GE5 / Orsay).